The primary structure comprises 120 residues: Crustacean hyperglycemic hormones 4 (120 aa).

Positions 1–26 (MVALNTLSAVSAALLVLAASPSPASA) are cleaved as a signal peptide. Disulfide bonds link C53-C89, C69-C85, and C72-C98. V118 bears the Valine amide mark.

The protein belongs to the arthropod CHH/MIH/GIH/VIH hormone family.

It is found in the secreted. Functionally, hormone found in the sinus gland of isopods and decapods which controls the blood sugar level. Has a secretagogue action over the amylase released from the midgut gland. May act as a stress hormone and may be involved in the control of molting and reproduction. This is Crustacean hyperglycemic hormones 4 (CHH4) from Penaeus monodon (Giant tiger prawn).